The sequence spans 23 residues: IIGDEINGAITTADNIAGKIGII.

Expressed in skin glands.

The protein resides in the secreted. In terms of biological role, may act as an antimicrobial peptide. In Osteopilus septentrionalis (Cuban treefrog), this protein is Septenin 2b.